Here is a 131-residue protein sequence, read N- to C-terminus: Inactive protein FON2 SPARE1 (131 aa).

A disordered region spans residues 67–131; sequence SPSSLTTTDR…VPTGPNPLHH (65 aa). A compositionally biased stretch (basic residues) spans 76–97; sequence RHHHHHRHHGHHHHRGHDRWNR.

Belongs to the CLV3/ESR signal peptide family. In terms of tissue distribution, expressed in all aerial apical meristems, including the floral and inflorescence meristems in the reproductive phase and the shoot apical meristem in the vegetative phase. Also detected in the primordia of lateral organs such as the leaf and the floral organs.

In terms of biological role, non functional suppressor of the fon2 mutation. In Oryza sativa subsp. japonica, the protein has a single amino acid substitution at the putative processing site of the signal peptide while in all the other varieties/species of domesticated and wild rice tested the protein is functional. This Oryza sativa subsp. japonica (Rice) protein is Inactive protein FON2 SPARE1 (FOS1).